An 858-amino-acid chain; its full sequence is MVNFTVDQIRAIMDKKANIRNMSVIAHVDHGKSTLTDSLVCKAGIIASARAGETRFTDTRKDEQERCITIKSTAISLFYELSENDLNFIKQSKDGAGFLINLIDSPGHVDFSSEVTAALRVTDGALVVVDCVSGVCVQTETVLRQAIAERIKPVLMMNKMDRALLELQLEPEELYQTFQRIVENVNVIISTYGEGESGPMGNIMIDPVLGTVGFGSGLHGWAFTLKQFAEMYVAKFAAKGEGQLGPAERAKKVEDMMKKLWGDRYFDPANGKFSKSATSPEGKKLPRTFCQLILDPIFKVFDAIMNFKKEETAKLIEKLDIKLDSEDKDKEGKPLLKAVMRRWLPAGDALLQMITIHLPSPVTAQKYRCELLYEGPPDDEAAMGIKSCDPKGPLMMYISKMVPTSDKGRFYAFGRVFSGLVSTGLKVRIMGPNYTPGKKEDLYLKPIQRTILMMGRYVEPIEDVPCGNIVGLVGVDQFLVKTGTITTFEHAHNMRVMKFSVSPVVRVAVEAKNPADLPKLVEGLKRLAKSDPMVQCIIEESGEHIIAGAGELHLEICLKDLEEDHACIPIKKSDPVVSYRETVSEESNVLCLSKSPNKHNRLYMKARPFPDGLAEDIDKGEVSARQELKQRARYLAEKYEWDVAEARKIWCFGPDGTGPNILTDITKGVQYLNEIKDSVVAGFQWATKEGALCEENMRGVRFDVHDVTLHADAIHRGGGQIIPTARRCLYASVLTAQPRLMEPIYLVEIQCPEQVVGGIYGVLNRKRGHVFEESQVAGTPMFVVKAYLPVNESFGFTADLRSNTGGQAFPQCVFDHWQILPGDPFDNSSRPSQVVAETRKRKGLKEGIPALDNFLDKL.

Residues Ala17 to Val362 form the tr-type G domain. Residue Ala26–Ser33 participates in GTP binding. Position 54 is a phosphothreonine (Thr54). Thr57 carries the phosphothreonine; by EEF2K modification. Thr59 bears the Phosphothreonine mark. Lys152 carries the post-translational modification N6-succinyllysine. GTP-binding positions include Asn158 to Asp161 and Ser216 to Leu218. N6-acetyllysine is present on Lys235. Lys239 carries the N6-acetyllysine; alternate modification. Lys239 participates in a covalent cross-link: Glycyl lysine isopeptide (Lys-Gly) (interchain with G-Cter in SUMO1); alternate. Tyr265 is subject to Phosphotyrosine; by CSK. Lys272 bears the N6-acetyllysine; alternate mark. Lys272 is modified (N6-succinyllysine; alternate). Lys275 carries the post-translational modification N6-acetyllysine. Lys322 participates in a covalent cross-link: Glycyl lysine isopeptide (Lys-Gly) (interchain with G-Cter in SUMO). Ser325 carries the post-translational modification Phosphoserine. Tyr373 is subject to Phosphotyrosine; by CSK. Position 435 is a phosphothreonine (Thr435). N6-acetyllysine occurs at positions 439 and 445. Ser502 is subject to Phosphoserine. Lys525 is modified (N6,N6,N6-trimethyllysine; by EEF2KMT). Residue Lys529 forms a Glycyl lysine isopeptide (Lys-Gly) (interchain with G-Cter in SUMO) linkage. Position 572 is an N6-succinyllysine (Lys572). Ser595 carries the phosphoserine; by CDK2 modification. Lys619 carries the post-translational modification N6-acetyllysine. A Diphthamide modification is found at His715.

This sequence belongs to the TRAFAC class translation factor GTPase superfamily. Classic translation factor GTPase family. EF-G/EF-2 subfamily. Binds to 80S ribosomes. Actively translating ribosomes show mutually exclusive binding of eIF5a (EIF5A or EIF5A2) and EEF2/eEF2. Interacts with SERBP1; interaction sequesters EEF2/eEF2 at the A-site of the ribosome, thereby blocking the interaction sites of the mRNA-tRNA complex, promoting ribosome stabilization and hibernation. Interacts with HABP4; interaction takes place at the A-site of hibernating ribosomes and promotes ribosome stabilization. Component of the mRNA surveillance SURF complex, at least composed of ERF1, ERF3 (ERF3A or ERF3B), EEF2, UPF1/RENT1, SMG1, SMG8 and SMG9. Interacts with RBPMS2. Phosphorylation by EF-2 kinase completely inactivates EF-2; it requires prior phosphorylation by CDK2 at Ser-595 during mitotic prometaphase. Phosphorylation by CSK promotes SUMOylation, proteolytic cleavage, and nuclear translocation if the C-terminal fragment. In terms of processing, diphthamide is 2-[3-carboxyamido-3-(trimethyl-ammonio)propyl]histidine. Post-translationally, ISGylated. Proteolytically processed at two sites following phosphorylation by CSK. In terms of processing, SUMOylated following phosphorylation by CSK, promotes proteolytic cleavage.

The protein localises to the cytoplasm. It localises to the nucleus. The enzyme catalyses GTP + H2O = GDP + phosphate + H(+). Functionally, catalyzes the GTP-dependent ribosomal translocation step during translation elongation. During this step, the ribosome changes from the pre-translocational (PRE) to the post-translocational (POST) state as the newly formed A-site-bound peptidyl-tRNA and P-site-bound deacylated tRNA move to the P and E sites, respectively. Catalyzes the coordinated movement of the two tRNA molecules, the mRNA and conformational changes in the ribosome. The polypeptide is Elongation factor 2 (EEF2) (Pongo abelii (Sumatran orangutan)).